A 693-amino-acid chain; its full sequence is TBC1 domain family member 12 (693 aa).

M1 bears the N-acetylmethionine mark. Disordered stretches follow at residues 1 to 57 (MMGP…EAPP), 91 to 120 (RGSGMTNGDSGFLLLQDRRGPEEARRRRTC), and 156 to 229 (AAGD…TTVR). Over residues 40–49 (GAVAAEPPGE) the composition is skewed to low complexity. Residues 106-115 (QDRRGPEEAR) are compositionally biased toward basic and acidic residues. Residues S202 and S233 each carry the phosphoserine modification. Residues 402–610 (GLPPSVRGKV…RVWDVFCRDG (209 aa)) enclose the Rab-GAP TBC domain.

In terms of assembly, interacts with RAB11A; this interaction recruits TBC1D12 to RAB11A-positive recycling endosomes.

It is found in the endosome. Its function is as follows. RAB11A-binding protein that plays a role in neurite outgrowth. This chain is TBC1 domain family member 12 (Tbc1d12), found in Rattus norvegicus (Rat).